The chain runs to 102 residues: Urease subunit beta (102 aa).

The protein belongs to the urease beta subunit family. Heterotrimer of UreA (gamma), UreB (beta) and UreC (alpha) subunits. Three heterotrimers associate to form the active enzyme.

Its subcellular location is the cytoplasm. The catalysed reaction is urea + 2 H2O + H(+) = hydrogencarbonate + 2 NH4(+). It functions in the pathway nitrogen metabolism; urea degradation; CO(2) and NH(3) from urea (urease route): step 1/1. The protein is Urease subunit beta of Pseudomonas syringae pv. tomato (strain ATCC BAA-871 / DC3000).